Here is a 156-residue protein sequence, read N- to C-terminus: Succinate dehydrogenase assembly factor 2-B, mitochondrial (156 aa).

Residues 1 to 24 (MLRQFIVSTVGRRLQLPMMAQSRL) constitute a mitochondrion transit peptide.

It belongs to the SDHAF2 family. Interacts with the flavoprotein subunit within the SDH catalytic dimer.

Its subcellular location is the mitochondrion matrix. Plays an essential role in the assembly of succinate dehydrogenase (SDH), an enzyme complex (also referred to as respiratory complex II) that is a component of both the tricarboxylic acid (TCA) cycle and the mitochondrial electron transport chain, and which couples the oxidation of succinate to fumarate with the reduction of ubiquinone (coenzyme Q) to ubiquinol. Required for flavinylation (covalent attachment of FAD) of the flavoprotein subunit of the SDH catalytic dimer. This chain is Succinate dehydrogenase assembly factor 2-B, mitochondrial, found in Drosophila simulans (Fruit fly).